The chain runs to 346 residues: MVQPRFVRPTQSSPSSISGEPNSSNLYVANCGPAVGLTHNAIAAVFAEFGEVNGVYAADDSGVRVIVSFADPFSAKAALEALSGRPCPDLKGRSLHIRYSVLQLPSETQVNDCVPVSLIDSELNIPGLFLLPDFVTVAEEQQLLAAVDARHWIGLAKRRVQHYGYEFCYGTRNVDTKKRLGELPSFVSPILERIYLFPNFDNGSASLNLDQLTVNEYPSGVGLSPHIDTHSAFEDCIFSLSLAGPCIMEFRRYSVSTWKASTTDAEKSGDSSCIKKALYLPPRSMLLLSGEARYAWNHYIPHHKIDKVKDKVIRRSSRRVSFTLRKVRNHPCSCKYPQYCDSQQQM.

A disordered region spans residues M1–P21. A compositionally biased stretch (low complexity) spans S12–P21. The RRM domain occupies S24–L102. A Fe2OG dioxygenase domain is found at N208 to R328. The Fe cation site is built by H226, D228, and H298. 2-oxoglutarate contacts are provided by R319 and R325.

It belongs to the alkB family. The cofactor is Fe(2+).

Binds tRNA and catalyzes the iron and alpha-ketoglutarate dependent hydroxylation of 5-methylcarboxymethyl uridine at the wobble position of the anticodon loop in tRNA via its dioxygenase domain, giving rise to 5-(S)-methoxycarbonylhydroxymethyluridine. This chain is Alkylated DNA repair protein ALKBH8 homolog, found in Arabidopsis thaliana (Mouse-ear cress).